Reading from the N-terminus, the 462-residue chain is uncharacterized protein (462 aa).

Transmembrane regions (helical) follow at residues 12 to 32 (WWWL…APTV) and 257 to 277 (GLCV…LELV).

Belongs to the HHV-5 US29 protein family.

It is found in the host membrane. This is an uncharacterized protein from Homo sapiens (Human).